Here is a 109-residue protein sequence, read N- to C-terminus: Parvalbumin beta (109 aa).

At alanine 2 the chain carries N-acetylalanine. The tract at residues 22 to 41 (AGSFDHKKFFKACGLSGKST) is igE-binding. 2 EF-hand domains span residues 39 to 74 (KSTDEVKKAFAIIDQDKSGFIEEEELKLFLQNFKAG) and 78 to 109 (LSDAETKAFLKAGDSDGDGKIGIDEFAAMIKG). Residues aspartate 52, aspartate 54, serine 56, phenylalanine 58, glutamate 60, glutamate 63, aspartate 91, aspartate 93, aspartate 95, lysine 97, and glutamate 102 each contribute to the Ca(2+) site.

It belongs to the parvalbumin family. The N-terminus is blocked. Expressed in both white and dark muscles (at protein level). About eight and a half times lower expression in the dark muscle than in the white muscle (at protein level).

In muscle, parvalbumin is thought to be involved in relaxation after contraction. It binds two calcium ions. This is Parvalbumin beta from Scomber japonicus (Chub mackerel).